A 1742-amino-acid chain; its full sequence is NACHT and WD repeat domain-containing protein 2 (1742 aa).

LRR repeat units follow at residues 386–410 (FYEY…GHIN), 677–698 (LEDV…TRPS), 724–747 (VKNV…LYLQ), 883–906 (YSQE…VIAF), and 925–953 (LPKL…SSMD). The NACHT domain maps to 410-737 (NPLVVYGGPC…TLLVWANRHL (328 aa)). WD repeat units follow at residues 963 to 1004 (LASS…LLRQ), 1007 to 1046 (TAQS…LLSE), 1140 to 1179 (FSGG…NPQL), 1229 to 1271 (RHNE…ASLQ), 1272 to 1311 (ESSG…AMSN), 1314 to 1353 (KTGK…IEAV), 1355 to 1394 (KHEG…NLFR), 1396 to 1434 (NGQR…RVCN), 1476 to 1516 (EDGI…ICRR), 1522 to 1561 (NFLK…LRVV), and 1614 to 1653 (SLYK…DAAL). Positions 1702 to 1721 (PITVSDSSESNEATPSKKHN) are disordered. Polar residues predominate over residues 1703–1715 (ITVSDSSESNEAT).

The sequence is that of NACHT and WD repeat domain-containing protein 2 (Nwd2) from Mus musculus (Mouse).